The sequence spans 156 residues: Small ribosomal subunit protein uS7 (156 aa).

The protein belongs to the universal ribosomal protein uS7 family. Part of the 30S ribosomal subunit. Contacts proteins S9 and S11.

Functionally, one of the primary rRNA binding proteins, it binds directly to 16S rRNA where it nucleates assembly of the head domain of the 30S subunit. Is located at the subunit interface close to the decoding center, probably blocks exit of the E-site tRNA. In Cutibacterium acnes (strain DSM 16379 / KPA171202) (Propionibacterium acnes), this protein is Small ribosomal subunit protein uS7.